Here is a 536-residue protein sequence, read N- to C-terminus: Caspase A (536 aa).

The propeptide at 1-273 (MVLKTIEDNC…DSQSRMPRTD (273 aa)) is removed in mature form by autoprocessing. Residues histidine 364 and cysteine 406 contribute to the active site.

The protein belongs to the peptidase C14A family. As to quaternary structure, heterodimer formed by the tight association of the large subunit p16 and the small subunit p14. Autocatalytic cleavage removes the propeptide and generates the two active subunits p16 and p14 in vitro. Cannot be cleaved by ced-3 in vitro. Isoform a: Expression is restricted to the late germline pachytene stage of meiosis I in both L4 larvae and adult hermaphrodite gonads. Isoform b: Expression is restricted to the late germline pachytene stage of meiosis I in both L4 larvae and adult hermaphrodite gonads.

The catalysed reaction is Strict requirement for an Asp residue at position P1 and has a preferred cleavage sequence of Tyr-Val-Ala-Asp-|-.. Its activity is regulated as follows. Inhibited by cysteine protease inhibitor iodoacetic acid (CH3COOI) but not by N-[N-(L-3-transcarboxirane-2-carbonyl)-leucyl]-agmatine (E-64) or benzyloxycarbonyl-DEVD-fluoro-methyl ketone (Z-DEVD-FMK). Functionally, cysteine protease which, in vitro, cleaves itself and caspase ced-3 into their mature active forms. Also cleaves, in vitro, inactive caspase csp-2 isoform b. Required maternally to induce apoptosis in a subset of cells fated to die during embryogenesis, mostly independently of the ced-9, ced-4 and ced-3 canonical apoptosis pathway. Involved in the degeneration of dopaminergic CEP neurons in response to high Mn(2+) levels. Dispensable for regulating apoptosis during embryogenesis. The polypeptide is Caspase A (Caenorhabditis elegans).